We begin with the raw amino-acid sequence, 133 residues long: MFYLRVLCVQRRLVREINKLSSFESNWLFLLFLVRVCRQLKTVTVLIVPVLPVYTNKVLRCSQCDWHEPANLDSIYQRSSHDDDLPTIKGSDASTQQYERKTYITDASPESQNLFLSKSKEEGVIFLCIQVSF.

This sequence belongs to the UPF0768 family.

This chain is UPF0768 protein C977.18, found in Schizosaccharomyces pombe (strain 972 / ATCC 24843) (Fission yeast).